We begin with the raw amino-acid sequence, 182 residues long: uncharacterized protein (182 aa).

This is an uncharacterized protein from Thermoproteus tenax (TTV1).